Here is a 626-residue protein sequence, read N- to C-terminus: Chaperone protein HtpG (626 aa).

The a; substrate-binding stretch occupies residues 1–341 (METKQFKAES…SEDLSLNISR (341 aa)). Residues 342–552 (EILQHDRQLK…EGELSIEMEK (211 aa)) form a b region. The segment at 490–509 (DLGIEGEEKENTSNSDDKEN) is disordered. The segment covering 498–509 (KENTSNSDDKEN) has biased composition (basic and acidic residues). A c region spans residues 553–626 (VLNAMPNNQN…FTNNICKIMK (74 aa)).

It belongs to the heat shock protein 90 family. As to quaternary structure, homodimer.

It is found in the cytoplasm. In terms of biological role, molecular chaperone. Has ATPase activity. The sequence is that of Chaperone protein HtpG from Clostridium botulinum (strain ATCC 19397 / Type A).